Here is a 112-residue protein sequence, read N- to C-terminus: Histone H3-4 (112 aa).

The interval Gln1–Arg31 is disordered.

The protein belongs to the histone H3 family. As to quaternary structure, the nucleosome is a histone octamer containing two molecules each of H2A, H2B, H3 and H4 assembled in one H3-H4 heterotetramer and two H2A-H2B heterodimers. The octamer wraps approximately 147 bp of DNA.

It is found in the nucleus. The protein resides in the chromosome. Core component of nucleosome. Nucleosomes wrap and compact DNA into chromatin, limiting DNA accessibility to the cellular machineries which require DNA as a template. Histones thereby play a central role in transcription regulation, DNA repair, DNA replication and chromosomal stability. DNA accessibility is regulated via a complex set of post-translational modifications of histones, also called histone code, and nucleosome remodeling. This Stylonychia lemnae (Ciliate) protein is Histone H3-4 (H3-4).